Here is a 313-residue protein sequence, read N- to C-terminus: Ribosomal RNA small subunit methyltransferase H (313 aa).

S-adenosyl-L-methionine contacts are provided by residues 35 to 37 (GGH), Asp55, Phe79, Asp101, and Gln108.

The protein belongs to the methyltransferase superfamily. RsmH family.

It is found in the cytoplasm. It catalyses the reaction cytidine(1402) in 16S rRNA + S-adenosyl-L-methionine = N(4)-methylcytidine(1402) in 16S rRNA + S-adenosyl-L-homocysteine + H(+). Functionally, specifically methylates the N4 position of cytidine in position 1402 (C1402) of 16S rRNA. This is Ribosomal RNA small subunit methyltransferase H from Escherichia coli O81 (strain ED1a).